The sequence spans 152 residues: Small ribosomal subunit protein uS13 (152 aa).

The protein belongs to the universal ribosomal protein uS13 family.

Its subcellular location is the cytoplasm. Located at the top of the head of the 40S subunit, it contacts several helices of the 18S rRNA. This chain is Small ribosomal subunit protein uS13 (RPS18), found in Branchiostoma belcheri (Amphioxus).